A 224-amino-acid polypeptide reads, in one-letter code: Thymidylate kinase (224 aa).

Gly13–Ser20 contributes to the ATP binding site.

It belongs to the thymidylate kinase family.

It carries out the reaction dTMP + ATP = dTDP + ADP. Functionally, phosphorylation of dTMP to form dTDP in both de novo and salvage pathways of dTTP synthesis. The sequence is that of Thymidylate kinase from Agrobacterium fabrum (strain C58 / ATCC 33970) (Agrobacterium tumefaciens (strain C58)).